A 201-amino-acid chain; its full sequence is CASP-like protein 1F2 (201 aa).

Over 1-29 the chain is Cytoplasmic; the sequence is MITSIATTTAGAFEVKSLGFIPYPSQPKR. Residues 30 to 50 form a helical membrane-spanning segment; sequence IFFMAQVIFRILAIAFAVASI. The Extracellular segment spans residues 51-78; that stretch reads SAMVTSDQNVIVFGMDTAARYSYSSAFR. A helical membrane pass occupies residues 79–99; sequence FLVGANAVVCGFSVLSLIFVC. Over 100–119 the chain is Cytoplasmic; sequence LMSRRSEAILEKNYYLFLHD. A helical membrane pass occupies residues 120 to 140; it reads MVMMVMMVSGCSAATAIGYVG. The Extracellular segment spans residues 141–162; it reads RYGEKEITWTAVCDFVGKFCNQ. Residues 163–183 form a helical membrane-spanning segment; that stretch reads ALVSIVLAYLALFCYVALTTL. Residues 184 to 201 are Cytoplasmic-facing; that stretch reads AAHKLNHSSSTAAIRQNE.

The protein belongs to the Casparian strip membrane proteins (CASP) family. Homodimer and heterodimers.

The protein localises to the cell membrane. The polypeptide is CASP-like protein 1F2 (Ricinus communis (Castor bean)).